Here is a 179-residue protein sequence, read N- to C-terminus: Orotate phosphoribosyltransferase (179 aa).

Residues Arg-24, Arg-89, Lys-90, Lys-93, and 115 to 123 (EDVITTGGA) each bind 5-phospho-alpha-D-ribose 1-diphosphate. Thr-119 and Arg-147 together coordinate orotate.

It belongs to the purine/pyrimidine phosphoribosyltransferase family. PyrE subfamily. As to quaternary structure, homodimer. Mg(2+) serves as cofactor.

It carries out the reaction orotidine 5'-phosphate + diphosphate = orotate + 5-phospho-alpha-D-ribose 1-diphosphate. It functions in the pathway pyrimidine metabolism; UMP biosynthesis via de novo pathway; UMP from orotate: step 1/2. Catalyzes the transfer of a ribosyl phosphate group from 5-phosphoribose 1-diphosphate to orotate, leading to the formation of orotidine monophosphate (OMP). In Nocardioides sp. (strain ATCC BAA-499 / JS614), this protein is Orotate phosphoribosyltransferase.